The sequence spans 42 residues: Delta-hexatoxin-Hv1b (42 aa).

4 disulfides stabilise this stretch: cysteine 1/cysteine 15, cysteine 8/cysteine 20, cysteine 14/cysteine 31, and cysteine 16/cysteine 42.

It belongs to the neurotoxin 06 (delta-actx) family. Expressed by the venom gland.

The protein resides in the secreted. In terms of biological role, lethal neurotoxin. Slows the inactivation of tetrodotoxin-sensitive voltage-gated sodium channels (Nav) by binding to site 3 of the channel, resulting in repetitive firing in autonomic and motor nerve fibers. The polypeptide is Delta-hexatoxin-Hv1b (Hadronyche versuta (Blue mountains funnel-web spider)).